The sequence spans 421 residues: Serine hydroxymethyltransferase (421 aa).

(6S)-5,6,7,8-tetrahydrofolate contacts are provided by residues Leu121 and 125–127; that span reads GHL. Lys229 bears the N6-(pyridoxal phosphate)lysine mark.

This sequence belongs to the SHMT family. In terms of assembly, homodimer. Requires pyridoxal 5'-phosphate as cofactor.

It localises to the cytoplasm. It carries out the reaction (6R)-5,10-methylene-5,6,7,8-tetrahydrofolate + glycine + H2O = (6S)-5,6,7,8-tetrahydrofolate + L-serine. It functions in the pathway one-carbon metabolism; tetrahydrofolate interconversion. The protein operates within amino-acid biosynthesis; glycine biosynthesis; glycine from L-serine: step 1/1. Functionally, catalyzes the reversible interconversion of serine and glycine with tetrahydrofolate (THF) serving as the one-carbon carrier. This reaction serves as the major source of one-carbon groups required for the biosynthesis of purines, thymidylate, methionine, and other important biomolecules. Also exhibits THF-independent aldolase activity toward beta-hydroxyamino acids, producing glycine and aldehydes, via a retro-aldol mechanism. In Haemophilus influenzae (strain ATCC 51907 / DSM 11121 / KW20 / Rd), this protein is Serine hydroxymethyltransferase.